The chain runs to 248 residues: Acetoacetyl-CoA reductase (248 aa).

NADP(+) contacts are provided by residues 14 to 16, R42, and 90 to 94; these read GGI and NAGIT. Substrate contacts are provided by residues D96 and 149–152; that span reads QFGQ. The active-site Proton acceptor is Y155. 185-188 is an NADP(+) binding site; sequence PGYT. Substrate is bound by residues 186 to 187 and R197; that span reads GY.

This sequence belongs to the short-chain dehydrogenases/reductases (SDR) family.

Its subcellular location is the cytoplasm. It carries out the reaction a (3R)-3-hydroxyacyl-CoA + NADP(+) = a 3-oxoacyl-CoA + NADPH + H(+). The protein operates within biopolymer metabolism; poly-(R)-3-hydroxybutanoate biosynthesis. This Acinetobacter sp. (strain RA3849) protein is Acetoacetyl-CoA reductase (phaB).